We begin with the raw amino-acid sequence, 163 residues long: MKIGIYPGSFDPVTLGHLDVIRRSAKIMDELVIGVLANSSKTPLFTVEERVKLLECVVKDIPNVKVVAFDGLTVDFAKKLGAKFLIRGLRAITDFEYELQIAQTNHKLDEEIDTVFFTTSVEYSYLSSSIVKEIASYGGDISKFVPNSIIQVIYDKYNGKRSE.

Substrate is bound at residue Ser-9. ATP-binding positions include 9–10 and His-17; that span reads SF. Substrate-binding residues include Lys-41, Thr-73, and Arg-87. Residues 88-90, Glu-98, and 123-129 contribute to the ATP site; these read GLR and YSYLSSS.

This sequence belongs to the bacterial CoaD family. As to quaternary structure, homohexamer. Requires Mg(2+) as cofactor.

Its subcellular location is the cytoplasm. The enzyme catalyses (R)-4'-phosphopantetheine + ATP + H(+) = 3'-dephospho-CoA + diphosphate. It participates in cofactor biosynthesis; coenzyme A biosynthesis; CoA from (R)-pantothenate: step 4/5. Its function is as follows. Reversibly transfers an adenylyl group from ATP to 4'-phosphopantetheine, yielding dephospho-CoA (dPCoA) and pyrophosphate. The polypeptide is Phosphopantetheine adenylyltransferase (Lachnoclostridium phytofermentans (strain ATCC 700394 / DSM 18823 / ISDg) (Clostridium phytofermentans)).